The primary structure comprises 496 residues: Probable cytosol aminopeptidase (496 aa).

Mn(2+) contacts are provided by Lys-257 and Asp-262. The active site involves Lys-269. 3 residues coordinate Mn(2+): Asp-281, Asp-341, and Glu-343. Residue Arg-345 is part of the active site.

Belongs to the peptidase M17 family. Requires Mn(2+) as cofactor.

The protein resides in the cytoplasm. The enzyme catalyses Release of an N-terminal amino acid, Xaa-|-Yaa-, in which Xaa is preferably Leu, but may be other amino acids including Pro although not Arg or Lys, and Yaa may be Pro. Amino acid amides and methyl esters are also readily hydrolyzed, but rates on arylamides are exceedingly low.. It catalyses the reaction Release of an N-terminal amino acid, preferentially leucine, but not glutamic or aspartic acids.. Its function is as follows. Presumably involved in the processing and regular turnover of intracellular proteins. Catalyzes the removal of unsubstituted N-terminal amino acids from various peptides. In Synechococcus sp. (strain CC9311), this protein is Probable cytosol aminopeptidase.